Consider the following 318-residue polypeptide: D-alanine--D-alanine ligase (318 aa).

The ATP-grasp domain maps to 101 to 307 (KKIIQYEGLP…FPDLIEKLVE (207 aa)). Residue 135–190 (CREMGLPLVVKAPTQGSTIGMSFVHKEEDMAGALELAYDYDPVALVEQFIRGTEVT) coordinates ATP. Mg(2+) contacts are provided by Asp261, Glu274, and Asn276.

This sequence belongs to the D-alanine--D-alanine ligase family. Mg(2+) serves as cofactor. It depends on Mn(2+) as a cofactor.

Its subcellular location is the cytoplasm. The enzyme catalyses 2 D-alanine + ATP = D-alanyl-D-alanine + ADP + phosphate + H(+). It functions in the pathway cell wall biogenesis; peptidoglycan biosynthesis. Its function is as follows. Cell wall formation. In Pelotomaculum thermopropionicum (strain DSM 13744 / JCM 10971 / SI), this protein is D-alanine--D-alanine ligase.